A 184-amino-acid polypeptide reads, in one-letter code: Ras-related protein O-Krev (184 aa).

Position 10–17 (10–17 (GSGGVGKS)) interacts with GTP. The Effector region signature appears at 32-40 (YDPTIEDSY). Residues 57–61 (DTAGT) and 116–119 (NKCD) contribute to the GTP site. Cys-181 carries the cysteine methyl ester modification. Residue Cys-181 is the site of S-geranylgeranyl cysteine attachment. The propeptide at 182 to 184 (TLL) is removed in mature form.

The protein belongs to the small GTPase superfamily. Ras family.

It is found in the cell membrane. It carries out the reaction GTP + H2O = GDP + phosphate + H(+). The protein is Ras-related protein O-Krev of Diplobatis ommata (Ocellated electric ray).